The following is a 137-amino-acid chain: Large ribosomal subunit protein uL16 (137 aa).

It belongs to the universal ribosomal protein uL16 family. Part of the 50S ribosomal subunit.

Functionally, binds 23S rRNA and is also seen to make contacts with the A and possibly P site tRNAs. In Pseudomonas aeruginosa (strain LESB58), this protein is Large ribosomal subunit protein uL16.